The chain runs to 220 residues: Imidazoleglycerol-phosphate dehydratase (220 aa).

Substrate is bound by residues Glu-14, 64–72 (HMIHALAKH), 90–94 (HHTTE), Arg-116, and Arg-138. Positions 64, 90, 91, and 94 each coordinate Mn(2+). Mn(2+) is bound by residues His-162, His-186, His-187, and Glu-190. Substrate contacts are provided by residues 186–194 (HHRSESAFK) and 214–216 (STK).

Belongs to the imidazoleglycerol-phosphate dehydratase family. It depends on Mn(2+) as a cofactor.

It catalyses the reaction D-erythro-1-(imidazol-4-yl)glycerol 3-phosphate = 3-(imidazol-4-yl)-2-oxopropyl phosphate + H2O. Its pathway is amino-acid biosynthesis; L-histidine biosynthesis; L-histidine from 5-phospho-alpha-D-ribose 1-diphosphate: step 6/9. The chain is Imidazoleglycerol-phosphate dehydratase from Saccharomyces cerevisiae (strain ATCC 204508 / S288c) (Baker's yeast).